Here is a 396-residue protein sequence, read N- to C-terminus: Tryptophan synthase beta chain (396 aa).

Lys-86 is modified (N6-(pyridoxal phosphate)lysine).

Belongs to the TrpB family. In terms of assembly, tetramer of two alpha and two beta chains. The cofactor is pyridoxal 5'-phosphate.

The catalysed reaction is (1S,2R)-1-C-(indol-3-yl)glycerol 3-phosphate + L-serine = D-glyceraldehyde 3-phosphate + L-tryptophan + H2O. It participates in amino-acid biosynthesis; L-tryptophan biosynthesis; L-tryptophan from chorismate: step 5/5. In terms of biological role, the beta subunit is responsible for the synthesis of L-tryptophan from indole and L-serine. The chain is Tryptophan synthase beta chain from Francisella philomiragia subsp. philomiragia (strain ATCC 25017 / CCUG 19701 / FSC 153 / O#319-036).